The primary structure comprises 278 residues: Pantothenate synthetase (278 aa).

Residue 30-37 (MGFLHEGH) participates in ATP binding. Catalysis depends on H37, which acts as the Proton donor. Q61 is a (R)-pantoate binding site. Beta-alanine is bound at residue Q61. 147 to 150 (GQKD) provides a ligand contact to ATP. Position 153 (Q153) interacts with (R)-pantoate. Residues V176 and 184–187 (LSSR) contribute to the ATP site.

This sequence belongs to the pantothenate synthetase family. Homodimer.

It is found in the cytoplasm. The enzyme catalyses (R)-pantoate + beta-alanine + ATP = (R)-pantothenate + AMP + diphosphate + H(+). Its pathway is cofactor biosynthesis; (R)-pantothenate biosynthesis; (R)-pantothenate from (R)-pantoate and beta-alanine: step 1/1. In terms of biological role, catalyzes the condensation of pantoate with beta-alanine in an ATP-dependent reaction via a pantoyl-adenylate intermediate. This is Pantothenate synthetase from Thermosipho africanus (strain TCF52B).